A 317-amino-acid polypeptide reads, in one-letter code: Protoheme IX farnesyltransferase (317 aa).

Helical transmembrane passes span 43 to 63 (PISVGLLAFTAAAMMVVAGAT), 65 to 85 (PVSGWLFVQALLAVVLACAGA), 119 to 139 (ALYWGLFLFVASLGLAWNLNP), 140 to 160 (IAWITLWGGMLGYVVVYSLWL), 168 to 188 (IVIGGVSGGMPALFGWAAVTG), 195 to 215 (VLIAALVVLWIPNHIWSLAIF), 238 to 258 (LNWLLLTVVLMVVFSVLIYFV), 261 to 281 (WGLVYLATALVMGAAALALSV), and 292 to 312 (AWVLFKFSSPYLAVLFLSMMV).

It belongs to the UbiA prenyltransferase family. Protoheme IX farnesyltransferase subfamily. As to quaternary structure, interacts with CtaA.

Its subcellular location is the cell membrane. It carries out the reaction heme b + (2E,6E)-farnesyl diphosphate + H2O = Fe(II)-heme o + diphosphate. Its pathway is porphyrin-containing compound metabolism; heme O biosynthesis; heme O from protoheme: step 1/1. In terms of biological role, converts heme B (protoheme IX) to heme O by substitution of the vinyl group on carbon 2 of heme B porphyrin ring with a hydroxyethyl farnesyl side group. The sequence is that of Protoheme IX farnesyltransferase from Desulforudis audaxviator (strain MP104C).